Reading from the N-terminus, the 148-residue chain is Lysozyme C, milk isozyme (148 aa).

An N-terminal signal peptide occupies residues 1–18; the sequence is MKALLIVGLLLLSVAVQG. In terms of domain architecture, C-type lysozyme spans 19–148; the sequence is KKFQRCELAR…LRSYVQGCRV (130 aa). Intrachain disulfides connect Cys-24–Cys-146, Cys-48–Cys-134, Cys-83–Cys-99, and Cys-95–Cys-113. Catalysis depends on residues Glu-53 and Asp-71.

It belongs to the glycosyl hydrolase 22 family.

It carries out the reaction Hydrolysis of (1-&gt;4)-beta-linkages between N-acetylmuramic acid and N-acetyl-D-glucosamine residues in a peptidoglycan and between N-acetyl-D-glucosamine residues in chitodextrins.. Functionally, lysozymes have primarily a bacteriolytic function; those in tissues and body fluids are associated with the monocyte-macrophage system and enhance the activity of immunoagents. This chain is Lysozyme C, milk isozyme, found in Bos taurus (Bovine).